Consider the following 220-residue polypeptide: Deoxyribose-phosphate aldolase (220 aa).

Asp89 acts as the Proton donor/acceptor in catalysis. Lys151 functions as the Schiff-base intermediate with acetaldehyde in the catalytic mechanism. The active-site Proton donor/acceptor is the Lys180.

The protein belongs to the DeoC/FbaB aldolase family. DeoC type 1 subfamily.

It is found in the cytoplasm. The enzyme catalyses 2-deoxy-D-ribose 5-phosphate = D-glyceraldehyde 3-phosphate + acetaldehyde. The protein operates within carbohydrate degradation; 2-deoxy-D-ribose 1-phosphate degradation; D-glyceraldehyde 3-phosphate and acetaldehyde from 2-deoxy-alpha-D-ribose 1-phosphate: step 2/2. In terms of biological role, catalyzes a reversible aldol reaction between acetaldehyde and D-glyceraldehyde 3-phosphate to generate 2-deoxy-D-ribose 5-phosphate. The chain is Deoxyribose-phosphate aldolase from Lactococcus lactis subsp. cremoris (strain SK11).